We begin with the raw amino-acid sequence, 387 residues long: 3-hydroxyisobutyryl-CoA hydrolase-like protein 5 (387 aa).

The residue at position 2 (Ala2) is an N-acetylalanine.

The protein belongs to the enoyl-CoA hydratase/isomerase family.

This Arabidopsis thaliana (Mouse-ear cress) protein is 3-hydroxyisobutyryl-CoA hydrolase-like protein 5.